The sequence spans 453 residues: uncharacterized protein (453 aa).

Residues 1 to 23 form the signal peptide; it reads MFLLQRFFIYGLFLACFYTTVFG. The Lumenal segment spans residues 24–137; the sequence is EKHFEAEEYR…EKQFSYSSGT (114 aa). Residues 138–158 traverse the membrane as a helical segment; that stretch reads NGILATFLTAIPPNIFILLVP. Topologically, residues 159-165 are cytoplasmic; the sequence is KSFDTSM. The chain crosses the membrane as a helical span at residues 166–186; sequence LNLFVAVSAGSLLGDVFLQLL. At 187–194 the chain is on the lumenal side; that stretch reads PTVYSTNG. The chain crosses the membrane as a helical span at residues 195-215; it reads GDFPASSVYSILIGALVFFLM. Over 216 to 358 the chain is Cytoplasmic; that stretch reads DKGIRILIHE…LRNGYTKSQV (143 aa). Basic and acidic residues predominate over residues 229-238; that stretch reads SLSKPKKDGE. The tract at residues 229 to 278 is disordered; that stretch reads SLSKPKKDGEETSSVNKPSASSTQTDVKGVEGLRKRNVKDDQNSKGHEPD. Polar residues predominate over residues 240–254; the sequence is TSSVNKPSASSTQTD. Basic and acidic residues predominate over residues 256–278; the sequence is KGVEGLRKRNVKDDQNSKGHEPD. The helical transmembrane segment at 359–379 threads the bilayer; sequence LVLQMITMVTGLLGAIVATYI. Topologically, residues 380–399 are lumenal; the sequence is YTASSSSSPYGSFLLQLEDK. The helical transmembrane segment at 400 to 420 threads the bilayer; that stretch reads LLPFTAGGFLYIAYLGVFPEL. Residues 421–432 lie on the Cytoplasmic side of the membrane; it reads LEINLSKGKLGN. The chain crosses the membrane as a helical span at residues 433-453; it reads MIYTALYMMFIVGGFSFLYYV.

It belongs to the ZIP transporter (TC 2.A.5) family. KE4/Catsup subfamily.

Its subcellular location is the endoplasmic reticulum membrane. This is an uncharacterized protein from Schizosaccharomyces pombe (strain 972 / ATCC 24843) (Fission yeast).